The primary structure comprises 539 residues: ATP synthase subunit beta (539 aa).

A disordered region spans residues Met-1–Pro-44. An ATP-binding site is contributed by Gly-212–Thr-219.

Belongs to the ATPase alpha/beta chains family. As to quaternary structure, F-type ATPases have 2 components, CF(1) - the catalytic core - and CF(0) - the membrane proton channel. CF(1) has five subunits: alpha(3), beta(3), gamma(1), delta(1), epsilon(1). CF(0) has three main subunits: a(1), b(2) and c(9-12). The alpha and beta chains form an alternating ring which encloses part of the gamma chain. CF(1) is attached to CF(0) by a central stalk formed by the gamma and epsilon chains, while a peripheral stalk is formed by the delta and b chains.

It is found in the cell inner membrane. The enzyme catalyses ATP + H2O + 4 H(+)(in) = ADP + phosphate + 5 H(+)(out). Functionally, produces ATP from ADP in the presence of a proton gradient across the membrane. The catalytic sites are hosted primarily by the beta subunits. The sequence is that of ATP synthase subunit beta from Caulobacter vibrioides (strain ATCC 19089 / CIP 103742 / CB 15) (Caulobacter crescentus).